The sequence spans 549 residues: MEEFKKYFERDSYWQQHFLYPLLFQEYIYALAHIHNHGLNGSIFYESGEVLGYDNKSSLILVKRLILRMYQQNFLIHSSNESHQNGFVGHKNPFFSQMISGGFAVIVEIPFSLPSLIEKKKKEITKSQNLRSIHSIFPFLVDQFSHLNYVSDILIPYPIHLEILIQIIQSWIQDVPSLHLLRFFLYEYHNWNSFITRKKSLSTFGKENPRFFWFLYNSYVSEYESVFCFLRKHSSYLLSTSYRNLIERTHFYGKIEHLPVVCSNDFHKNLQLFKDPCMHYVRYQGKAILASKGTSLLMKKWKWYLVNFWECNFSFWFQPYRIHINQLSNSSFLFWGYFSIVLINPLPVRSQMLGYSCLIDNTLTKKLETLVPIIPLIGSLSKAKFCNVSGHPASKPIWTDLSDSDIIDRFVRICRTLSHYHSGSSKKQSLYRMKYILRLSCARTLARKHKTTVRAFFQRLGSGFLEEFFTEEQKFLSLVLPRTSLASGSDRVYKERIWYLDIIRINDLVNYSRLAMELCTGNITKRIEKRSKIAFLFSTDMLKCSCSGS.

The protein belongs to the intron maturase 2 family. MatK subfamily.

Its subcellular location is the plastid. It localises to the chloroplast. Functionally, usually encoded in the trnK tRNA gene intron. Probably assists in splicing its own and other chloroplast group II introns. In Albidella oligococca (Caldesia oligococca), this protein is Maturase K.